Consider the following 216-residue polypeptide: Superoxide dismutase [Cu-Zn] 2, chloroplastic (216 aa).

A chloroplast-targeting transit peptide spans Met1–Ser62. Cu cation contacts are provided by His108, His110, and His125. Cys119 and Cys208 form a disulfide bridge. 4 residues coordinate Zn(2+): His125, His133, His142, and Asp145. Residue His182 coordinates Cu cation.

The protein belongs to the Cu-Zn superoxide dismutase family. Homotetramer. Cu cation is required as a cofactor. Requires Zn(2+) as cofactor. As to expression, expressed in leaves (at protein level). The spatial localization is regulated by miR398-mediated silencing. Mostly present in flowers, old rosette leaves and inflorescence, and, to a lower extent, in cauline leaves, stems and roots.

It localises to the plastid. It is found in the chloroplast. The enzyme catalyses 2 superoxide + 2 H(+) = H2O2 + O2. Functionally, destroys radicals which are normally produced within the cells and which are toxic to biological systems. Mediates tolerance to stress, including photo-oxidative stress. This is Superoxide dismutase [Cu-Zn] 2, chloroplastic (CSD2) from Arabidopsis thaliana (Mouse-ear cress).